The chain runs to 59 residues: Antitoxin RelB4 (59 aa).

The disordered stretch occupies residues 38–59 (VGEWLKTLGTPHQTPPPYSWRK). Residues 50–59 (QTPPPYSWRK) show a composition bias toward pro residues.

Functionally, antitoxin component of a type II toxin-antitoxin (TA) system. Neutralizes the effect of cognate toxin RelE4, but no other RelE or ParE toxin. The protein is Antitoxin RelB4 (relB4) of Caulobacter vibrioides (strain ATCC 19089 / CIP 103742 / CB 15) (Caulobacter crescentus).